Reading from the N-terminus, the 197-residue chain is Prefoldin subunit 3 (197 aa).

The interval 1–26 (MASLALRGSSENPAPTKDTTTNPRGI) is disordered. The span at 9–23 (SSENPAPTKDTTTNP) shows a compositional bias: polar residues.

The protein belongs to the prefoldin subunit alpha family. As to quaternary structure, heterohexamer of two PFD-alpha type and four PFD-beta type subunits.

Prefoldin subunit; part of the gene cluster that mediates the biosynthesis of elsinochromes, pigments consisting of at least four interconvertible tautomers (A, B, C and D) that have a core phenolic quinone to which various side chains are attached and which play an important role in fungal pathogenesis. The non-reducing polyketide synthase PKS1 was proposed to iteratively catalyze decarboxylation between acetyl-CoA and malonyl-CoA subunits for polyketide chain elongation. The released polyketide undergoes cyclization to form an aromatic ring, and proceeds via serial modification steps to produce the heptaketide back- bone of elsinochrome. As elsinochrome has a symmetrical structure, two identical heptaketides are fused to form a core 1,2-dihydrobenzo-perylene ring structure, which can then be successively modified to produce the various derivatives of elsinochrome. Some of these reactions may be cooperatively carried out, at least in part, by the products of RDT1, OXR1 and PKS1. PRF1, embedded within the elsinochrome cluster possibly functions to stabilize some of the biosynthetic enzymes required for elsinochrome production. As prefoldin is a hexamer containing 2 a and 4 b subunits, additional prefoldin subunits, whose coding genes may not immediately link to the elsinochrome biosynthetic gene cluster, are required to fulfill the chaperone function. In addition, no methyltransferase-coding gene exists within the biosynthetic gene cluster, even though elsinochrome has four methyl groups at positions C3, C7, C8 and C12. Apparently, the identified gene cluster does not contain the entire entourage of genes responsible for elsinochrome biosynthesis. Once elsinochrome is synthesized, it must be exported outside the fungal cells, which is probably accomplished by the ECT1 transporter, to avoid toxicity. This chain is Prefoldin subunit 3, found in Elsinoe fawcettii (Citrus scab fungus).